Here is a 434-residue protein sequence, read N- to C-terminus: Methylenetetrahydrofolate--tRNA-(uracil-5-)-methyltransferase TrmFO (434 aa).

Position 9–14 (Gly-9–Gly-14) interacts with FAD.

It belongs to the MnmG family. TrmFO subfamily. Requires FAD as cofactor.

It is found in the cytoplasm. It carries out the reaction uridine(54) in tRNA + (6R)-5,10-methylene-5,6,7,8-tetrahydrofolate + NADH + H(+) = 5-methyluridine(54) in tRNA + (6S)-5,6,7,8-tetrahydrofolate + NAD(+). The enzyme catalyses uridine(54) in tRNA + (6R)-5,10-methylene-5,6,7,8-tetrahydrofolate + NADPH + H(+) = 5-methyluridine(54) in tRNA + (6S)-5,6,7,8-tetrahydrofolate + NADP(+). In terms of biological role, catalyzes the folate-dependent formation of 5-methyl-uridine at position 54 (M-5-U54) in all tRNAs. This is Methylenetetrahydrofolate--tRNA-(uracil-5-)-methyltransferase TrmFO from Listeria monocytogenes serovar 1/2a (strain ATCC BAA-679 / EGD-e).